The sequence spans 395 residues: Beta-1,4-galactosyltransferase 3 (395 aa).

Over 1–10 (MLRRLLERPC) the chain is Cytoplasmic. Residues 11–31 (TLALLVGSQLAVMMYLSLGGF) form a helical; Signal-anchor for type II membrane protein membrane-spanning segment. Residues 32–395 (RSLSALFGRD…ANHTAPRGSH (364 aa)) are Lumenal-facing. The N-linked (GlcNAc...) asparagine glycan is linked to Asn-57. An intrachain disulfide couples Cys-79 to Cys-121. 132 to 136 (PHRAR) contacts UDP-alpha-D-galactose. N-linked (GlcNAc...) asparagine glycosylation is present at Asn-168. UDP-alpha-D-galactose-binding positions include 171 to 173 (FNR), 198 to 199 (VD), Tyr-228, and Trp-260. A disulfide bridge connects residues Cys-192 and Cys-211. Asp-199 is a binding site for Mn(2+). 262 to 265 (GEDD) is a binding site for N-acetyl-D-glucosamine. His-293 is a binding site for Mn(2+). Residue 293-295 (HRG) coordinates UDP-alpha-D-galactose. Arg-305 serves as a coordination point for N-acetyl-D-glucosamine. Residue Asn-339 is glycosylated (N-linked (GlcNAc...) asparagine). The disordered stretch occupies residues 340-395 (ITADIGTDPRGPRSPSGPRYPPGSSQAFRQEMLQRRPPARPGPLPTANHTAPRGSH). The span at 352 to 364 (RSPSGPRYPPGSS) shows a compositional bias: low complexity. A glycan (N-linked (GlcNAc...) asparagine) is linked at Asn-387.

It belongs to the glycosyltransferase 7 family. The cofactor is Mn(2+).

It localises to the golgi apparatus. Its subcellular location is the golgi stack membrane. The catalysed reaction is an N-acetyl-beta-D-glucosaminyl derivative + UDP-alpha-D-galactose = a beta-D-galactosyl-(1-&gt;4)-N-acetyl-beta-D-glucosaminyl derivative + UDP + H(+). It catalyses the reaction N-acetyl-D-glucosamine + UDP-alpha-D-galactose = beta-D-galactosyl-(1-&gt;4)-N-acetyl-D-glucosamine + UDP + H(+). The enzyme catalyses a beta-D-GlcNAc-(1-&gt;3)-beta-D-Gal-(1-&gt;4)-beta-D-Glc-(1&lt;-&gt;1)-Cer(d18:1(4E)) + UDP-alpha-D-galactose = a neolactoside nLc4Cer(d18:1(4E)) + UDP + H(+). It carries out the reaction a beta-D-glucosylceramide + UDP-alpha-D-galactose = a beta-D-galactosyl-(1-&gt;4)-beta-D-glucosyl-(1&lt;-&gt;1)-ceramide + UDP + H(+). The catalysed reaction is a neolactoside IV(3)-beta-GlcNAc-nLc4Cer + UDP-alpha-D-galactose = a neolactoside nLc6Cer + UDP + H(+). It functions in the pathway protein modification; protein glycosylation. Functionally, responsible for the synthesis of complex-type N-linked oligosaccharides in many glycoproteins as well as the carbohydrate moieties of glycolipids. The sequence is that of Beta-1,4-galactosyltransferase 3 from Mus musculus (Mouse).